Here is a 346-residue protein sequence, read N- to C-terminus: Haptoglobin-related protein (346 aa).

Positions 1–16 (DLGAVIYLLLWGRQLF) form a signal peptide, not cleaved. Residues 32–85 (FPKPPEIANGYVEHLFRYQRKNYYRLRTEGDGVYTLNDKKQWINKAVGDKLPEC) enclose the Sushi domain. One can recognise a Peptidase S1 domain in the interval 102–344 (ILGGHLDAKG…IHVWVQKTIA (243 aa)). 2 disulfides stabilise this stretch: Cys-249/Cys-280 and Cys-291/Cys-321.

This sequence belongs to the peptidase S1 family.

The protein resides in the secreted. Functionally, primate-specific plasma protein associated with apolipoprotein L-I (apoL-I)-containing high-density lipoprotein (HDL). Binds hemoglobin with high affinity and may contribute to the clearance of cell-free hemoglobin to allow hepatic recycling of heme iron. This Pan troglodytes (Chimpanzee) protein is Haptoglobin-related protein (HPR).